The chain runs to 150 residues: Ribosomal RNA large subunit methyltransferase H (150 aa).

S-adenosyl-L-methionine is bound by residues Leu68, Gly97, and 116–121 (LSAMTL).

Belongs to the RNA methyltransferase RlmH family. Homodimer.

The protein localises to the cytoplasm. The enzyme catalyses pseudouridine(1915) in 23S rRNA + S-adenosyl-L-methionine = N(3)-methylpseudouridine(1915) in 23S rRNA + S-adenosyl-L-homocysteine + H(+). Functionally, specifically methylates the pseudouridine at position 1915 (m3Psi1915) in 23S rRNA. This chain is Ribosomal RNA large subunit methyltransferase H, found in Prochlorococcus marinus (strain MIT 9303).